The primary structure comprises 120 residues: Large ribosomal subunit protein uL22 (120 aa).

It belongs to the universal ribosomal protein uL22 family. In terms of assembly, part of the 50S ribosomal subunit.

Its function is as follows. This protein binds specifically to 23S rRNA; its binding is stimulated by other ribosomal proteins, e.g. L4, L17, and L20. It is important during the early stages of 50S assembly. It makes multiple contacts with different domains of the 23S rRNA in the assembled 50S subunit and ribosome. The globular domain of the protein is located near the polypeptide exit tunnel on the outside of the subunit, while an extended beta-hairpin is found that lines the wall of the exit tunnel in the center of the 70S ribosome. This is Large ribosomal subunit protein uL22 from Oenococcus oeni (strain ATCC BAA-331 / PSU-1).